Here is a 147-residue protein sequence, read N- to C-terminus: Large ribosomal subunit protein uL15 (147 aa).

Positions methionine 1 to valine 46 are disordered. Residues lysine 16–glycine 28 are compositionally biased toward basic residues.

It belongs to the universal ribosomal protein uL15 family. As to quaternary structure, part of the 50S ribosomal subunit.

Functionally, binds to the 23S rRNA. The chain is Large ribosomal subunit protein uL15 from Mesomycoplasma hyopneumoniae (strain 232) (Mycoplasma hyopneumoniae).